The following is a 343-amino-acid chain: Heat-inducible transcription repressor HrcA (343 aa).

It belongs to the HrcA family.

Negative regulator of class I heat shock genes (grpE-dnaK-dnaJ and groELS operons). Prevents heat-shock induction of these operons. The polypeptide is Heat-inducible transcription repressor HrcA (Bacillus licheniformis (strain ATCC 14580 / DSM 13 / JCM 2505 / CCUG 7422 / NBRC 12200 / NCIMB 9375 / NCTC 10341 / NRRL NRS-1264 / Gibson 46)).